Here is a 499-residue protein sequence, read N- to C-terminus: Nucleoside transporter 2 (499 aa).

Topologically, residues 1-30 (MTGQSAAVEGSNSALPWYRMGFHTLAEFNT) are cytoplasmic. 5 helical membrane-spanning segments follow: residues 31–51 (YVTFVLLGMSIMMVTSAVTSA), 112–132 (LFLGLGIPFVELVVIIAVPAA), 133–153 (TIPTQNGAIAVIMVVAMMGGL), 179–199 (WGLTVIALFMSIIQIILQVSM), and 212–232 (IYFGIGIGIQVMAIAALVLLR). Basic and acidic residues predominate over residues 255–267 (VEPEESQDSKEPA). The interval 255-276 (VEPEESQDSKEPATGDVAEAPK) is disordered. N-linked (GlcNAc...) asparagine glycosylation occurs at Asn-326. Helical transmembrane passes span 350 to 370 (LCAFTIFFTTLLVFPGVFFLV), 378 to 398 (MTIIVTLFNAGDFVARVLLMI), 406 to 426 (KLVIVGTFGRLAVIPLIVLCV), 428 to 448 (GFIPGVALPYVLIFLFGLTNG), and 475 to 495 (MLAGISLMLGLCFGSNMSLAI).

Belongs to the SLC29A/ENT transporter (TC 2.A.57) family.

The protein localises to the cell membrane. It is found in the cell projection. The protein resides in the cilium. It localises to the flagellum. It carries out the reaction inosine(in) + H(+)(in) = inosine(out) + H(+)(out). The enzyme catalyses guanosine(in) + H(+)(in) = guanosine(out) + H(+)(out). The catalysed reaction is xanthosine(in) + H(+)(in) = xanthosine(out) + H(+)(out). In terms of biological role, high affinity nucleoside:H(+) symporter; transports inosine and guanosine. Can transport xanthosine. The chain is Nucleoside transporter 2 from Leishmania donovani.